Here is a 101-residue protein sequence, read N- to C-terminus: Large ribosomal subunit protein eL30 (101 aa).

It belongs to the eukaryotic ribosomal protein eL30 family.

This Thermococcus celer protein is Large ribosomal subunit protein eL30 (rpl30e).